A 1502-amino-acid polypeptide reads, in one-letter code: tRNA (32-2'-O)-methyltransferase regulator trm732 (1502 aa).

Belongs to the THADA family.

Its subcellular location is the cytoplasm. The protein resides in the nucleus. Its function is as follows. Together with methyltransferase trm7, methylates the 2'-O-ribose of nucleotides at position 32 of the anticodon loop of substrate tRNAs. This Schizosaccharomyces pombe (strain 972 / ATCC 24843) (Fission yeast) protein is tRNA (32-2'-O)-methyltransferase regulator trm732.